The sequence spans 183 residues: Orotate phosphoribosyltransferase (183 aa).

5-phospho-alpha-D-ribose 1-diphosphate-binding positions include arginine 21, lysine 88, and 112-120 (EDVVTTGES). Threonine 116 and arginine 144 together coordinate orotate.

It belongs to the purine/pyrimidine phosphoribosyltransferase family. PyrE subfamily. Homodimer. It depends on Mg(2+) as a cofactor.

The enzyme catalyses orotidine 5'-phosphate + diphosphate = orotate + 5-phospho-alpha-D-ribose 1-diphosphate. It participates in pyrimidine metabolism; UMP biosynthesis via de novo pathway; UMP from orotate: step 1/2. Catalyzes the transfer of a ribosyl phosphate group from 5-phosphoribose 1-diphosphate to orotate, leading to the formation of orotidine monophosphate (OMP). This is Orotate phosphoribosyltransferase from Thermus thermophilus (strain ATCC 27634 / DSM 579 / HB8).